The primary structure comprises 236 residues: 7-cyano-7-deazaguanine synthase (236 aa).

13 to 23 serves as a coordination point for ATP; that stretch reads FSGGQDSTVCL. Residues Cys200, Cys215, Cys218, and Cys221 each coordinate Zn(2+).

The protein belongs to the QueC family. The cofactor is Zn(2+).

The enzyme catalyses 7-carboxy-7-deazaguanine + NH4(+) + ATP = 7-cyano-7-deazaguanine + ADP + phosphate + H2O + H(+). Its pathway is purine metabolism; 7-cyano-7-deazaguanine biosynthesis. In terms of biological role, catalyzes the ATP-dependent conversion of 7-carboxy-7-deazaguanine (CDG) to 7-cyano-7-deazaguanine (preQ(0)). The polypeptide is 7-cyano-7-deazaguanine synthase (Parvibaculum lavamentivorans (strain DS-1 / DSM 13023 / NCIMB 13966)).